Reading from the N-terminus, the 414-residue chain is Serine hydroxymethyltransferase (414 aa).

(6S)-5,6,7,8-tetrahydrofolate is bound by residues L117 and 121–123 (GHL). An N6-(pyridoxal phosphate)lysine modification is found at K226.

Belongs to the SHMT family. In terms of assembly, homodimer. Pyridoxal 5'-phosphate serves as cofactor.

It localises to the cytoplasm. It carries out the reaction (6R)-5,10-methylene-5,6,7,8-tetrahydrofolate + glycine + H2O = (6S)-5,6,7,8-tetrahydrofolate + L-serine. Its pathway is one-carbon metabolism; tetrahydrofolate interconversion. It participates in amino-acid biosynthesis; glycine biosynthesis; glycine from L-serine: step 1/1. Its function is as follows. Catalyzes the reversible interconversion of serine and glycine with tetrahydrofolate (THF) serving as the one-carbon carrier. This reaction serves as the major source of one-carbon groups required for the biosynthesis of purines, thymidylate, methionine, and other important biomolecules. Also exhibits THF-independent aldolase activity toward beta-hydroxyamino acids, producing glycine and aldehydes, via a retro-aldol mechanism. The protein is Serine hydroxymethyltransferase of Dictyoglomus turgidum (strain DSM 6724 / Z-1310).